Reading from the N-terminus, the 274-residue chain is Nitrogenase iron protein (274 aa).

An ATP-binding site is contributed by 8–15 (GKGGIGKS). Cysteine 94 lines the [4Fe-4S] cluster pocket. The residue at position 97 (arginine 97) is an ADP-ribosylarginine; by dinitrogenase reductase ADP-ribosyltransferase. A [4Fe-4S] cluster-binding site is contributed by cysteine 131.

The protein belongs to the NifH/BchL/ChlL family. Homodimer. [4Fe-4S] cluster serves as cofactor. In terms of processing, the reversible ADP-ribosylation of Arg-97 inactivates the nitrogenase reductase and regulates nitrogenase activity.

The catalysed reaction is N2 + 8 reduced [2Fe-2S]-[ferredoxin] + 16 ATP + 16 H2O = H2 + 8 oxidized [2Fe-2S]-[ferredoxin] + 2 NH4(+) + 16 ADP + 16 phosphate + 6 H(+). The key enzymatic reactions in nitrogen fixation are catalyzed by the nitrogenase complex, which has 2 components: the iron protein and the molybdenum-iron protein. This chain is Nitrogenase iron protein, found in Chlorobium chlorochromatii (strain CaD3).